The following is a 362-amino-acid chain: 3-dehydroquinate synthase (362 aa).

Residues Glu70–Lys75, Gly104–Asp108, Thr128–Thr129, Lys141, Lys150, and Thr168–Thr171 contribute to the NAD(+) site. Zn(2+) is bound by residues Glu183, His246, and His263.

It belongs to the sugar phosphate cyclases superfamily. Dehydroquinate synthase family. Co(2+) is required as a cofactor. Zn(2+) serves as cofactor. It depends on NAD(+) as a cofactor.

It localises to the cytoplasm. It catalyses the reaction 7-phospho-2-dehydro-3-deoxy-D-arabino-heptonate = 3-dehydroquinate + phosphate. Its pathway is metabolic intermediate biosynthesis; chorismate biosynthesis; chorismate from D-erythrose 4-phosphate and phosphoenolpyruvate: step 2/7. Functionally, catalyzes the conversion of 3-deoxy-D-arabino-heptulosonate 7-phosphate (DAHP) to dehydroquinate (DHQ). The polypeptide is 3-dehydroquinate synthase (Histophilus somni (strain 2336) (Haemophilus somnus)).